The chain runs to 200 residues: Putative AgrB-like protein (200 aa).

Helical transmembrane passes span 49 to 69, 88 to 108, 114 to 134, 148 to 168, and 171 to 191; these read LIIT…LVFM, LLCT…IQFT, LFRF…SPAV, ALKH…FLVS, and LGTI…PLKG.

It belongs to the AgrB family.

Its subcellular location is the cell membrane. Functionally, may be involved in the proteolytic processing of a quorum sensing system signal molecule precursor. The sequence is that of Putative AgrB-like protein from Lactiplantibacillus plantarum (strain ATCC BAA-793 / NCIMB 8826 / WCFS1) (Lactobacillus plantarum).